The sequence spans 1468 residues: DNA polymerase alpha catalytic subunit A (1468 aa).

Positions 1–12 (MSSKSEKLEKLR) are enriched in basic and acidic residues. Disordered stretches follow at residues 1-34 (MSSKSEKLEKLRKLQAARNGTSIDDYEGDESDGD), 71-135 (GVEE…KKSI), and 166-205 (NLNSSPTSEFKSSIKRVNGNDESSHDAGISKKVKIDPDSS). N-acetylserine is present on S2. S31 is modified (phosphoserine). Residues 71 to 80 (GVEEDWREVD) are compositionally biased toward basic and acidic residues. Phosphoserine occurs at positions 82, 83, 84, 169, and 170. Positions 166 to 176 (NLNSSPTSEFK) are enriched in polar residues. T172 carries the phosphothreonine modification. Basic and acidic residues predominate over residues 183 to 205 (NGNDESSHDAGISKKVKIDPDSS). 2 positions are modified to phosphoserine: S240 and S274. The segment at 256-275 (LANPPSAQSLADEEDDEDSD) is disordered. Residues 266-275 (ADEEDDEDSD) are compositionally biased toward acidic residues. Phosphothreonine is present on residues T309 and T313. Positions 813–837 (PDKEGNRSRAQKQRQNEENADAPVN) are disordered. The DNA-binding stretch occupies residues 1246-1381 (KKYFRREGGN…CTGVMRYKYS (136 aa)). Zn(2+)-binding residues include C1287, C1290, C1314, C1317, C1348, C1353, C1367, and C1372. The CysA-type zinc-finger motif lies at 1287-1317 (CPSCDKRFPFGGIVSSNYYRVSYNGLQCKHC). Residues 1348–1372 (CDDSTCGIVTRQVSVFGKRCLNDGC) carry the CysB motif motif.

Belongs to the DNA polymerase type-B family. In terms of assembly, DNA polymerase alpha:primase is a four subunit enzyme complex, which is assembled throughout the cell cycle, and consists of the two DNA polymerase subunits A POL1 and B POL12, and the DNA primase large PRI2 and small PRI1 subunits. Subunit B POL12 binds to subunit A POL1. POL1 interacts with CDC13, POB3, SPT16 and MCM10.

It localises to the nucleus. It catalyses the reaction DNA(n) + a 2'-deoxyribonucleoside 5'-triphosphate = DNA(n+1) + diphosphate. Functionally, catalytic component of DNA polymerase alpha, which in complex with DNA primase (DNA polymerase alpha:primase) constitutes a replicative polymerase. POL1 has a role in promoting telomere replication during interaction with CDC13. In Saccharomyces cerevisiae (strain ATCC 204508 / S288c) (Baker's yeast), this protein is DNA polymerase alpha catalytic subunit A (POL1).